A 239-amino-acid polypeptide reads, in one-letter code: Elongation factor Ts (239 aa).

Positions Thr-82–Val-85 are involved in Mg(2+) ion dislocation from EF-Tu. Residues Ala-213–Lys-239 form a disordered region. The segment covering Ala-229–Lys-239 has biased composition (basic residues).

It belongs to the EF-Ts family.

It is found in the cytoplasm. Its function is as follows. Associates with the EF-Tu.GDP complex and induces the exchange of GDP to GTP. It remains bound to the aminoacyl-tRNA.EF-Tu.GTP complex up to the GTP hydrolysis stage on the ribosome. This is Elongation factor Ts from Acaryochloris marina (strain MBIC 11017).